The chain runs to 337 residues: MRVLGIETSCDETGIAIYDDERGLLANQLYSQVKLHADYGGVVPELASRDHVRKTVPLIQAALKEAGLMASDIDAVAYTAGPGLVGALLVGATVGRSLAFAWNVPAIPVHHMEGHLLAPMLEDNPPDFPFVALLVSGGHTQLISVTGIGQYELLGESIDDAAGEAFDKTAKLLGLDYPGGPMLSKMALQGTAGRFVFPRPMTDRPGLDFSFSGLKTFAANTIRSNGEDEQTRADIARAFEDAVVDTLMIKCKRALESTGFKRLVMAGGVSANQTLRAKLAEMMQKRCGEVFYARPEFCTDNGAMIAYAGMVRFKAGVTADLGVTVRPRWPLAELPAV.

2 residues coordinate Fe cation: histidine 111 and histidine 115. Residues 134–138, aspartate 167, glycine 180, and asparagine 272 each bind substrate; that span reads LVSGG. Aspartate 300 serves as a coordination point for Fe cation.

The protein belongs to the KAE1 / TsaD family. The cofactor is Fe(2+).

The protein resides in the cytoplasm. It catalyses the reaction L-threonylcarbamoyladenylate + adenosine(37) in tRNA = N(6)-L-threonylcarbamoyladenosine(37) in tRNA + AMP + H(+). Functionally, required for the formation of a threonylcarbamoyl group on adenosine at position 37 (t(6)A37) in tRNAs that read codons beginning with adenine. Is involved in the transfer of the threonylcarbamoyl moiety of threonylcarbamoyl-AMP (TC-AMP) to the N6 group of A37, together with TsaE and TsaB. TsaD likely plays a direct catalytic role in this reaction. The chain is tRNA N6-adenosine threonylcarbamoyltransferase from Salmonella arizonae (strain ATCC BAA-731 / CDC346-86 / RSK2980).